The primary structure comprises 132 residues: L-ectoine synthase (132 aa).

This sequence belongs to the ectoine synthase family.

The enzyme catalyses (2S)-4-acetamido-2-aminobutanoate = L-ectoine + H2O. It functions in the pathway amine and polyamine biosynthesis; ectoine biosynthesis; L-ectoine from L-aspartate 4-semialdehyde: step 3/3. In terms of biological role, catalyzes the circularization of gamma-N-acetyl-alpha,gamma-diaminobutyric acid (ADABA) to ectoine (1,4,5,6-tetrahydro-2-methyl-4-pyrimidine carboxylic acid), which is an excellent osmoprotectant. In Rhodococcus opacus (strain B4), this protein is L-ectoine synthase.